We begin with the raw amino-acid sequence, 188 residues long: UPF0301 protein Smlt1098 (188 aa).

Belongs to the UPF0301 (AlgH) family.

This is UPF0301 protein Smlt1098 from Stenotrophomonas maltophilia (strain K279a).